The chain runs to 403 residues: SEC14-like protein 4 (403 aa).

The region spanning 76-249 (APEVIQLYDS…EFGGTMTDPD (174 aa)) is the CRAL-TRIO domain. The GOLD domain occupies 275–383 (RPQYEHSVVV…TKKVGYTAEV (109 aa)).

In terms of biological role, probable hydrophobic ligand-binding protein; may play a role in the transport of hydrophobic ligands like tocopherol, squalene and phospholipids. In Mus musculus (Mouse), this protein is SEC14-like protein 4 (Sec14l4).